The chain runs to 64 residues: Conotoxin Leo-T1 (64 aa).

An N-terminal signal peptide occupies residues 1–22 (MRCLPVFIILLLLIPSAPSVDA). The propeptide occupies 23-48 (QPKTEDDVPLASLHDNAKLTLQGLWD).

This sequence belongs to the conotoxin T superfamily. Post-translationally, contains 2 disulfide bonds that can be either 'C1-C3, C2-C4' or 'C1-C4, C2-C3', since these disulfide connectivities have been observed for conotoxins with cysteine framework V (for examples, see AC P0DQQ7 and AC P81755). In terms of tissue distribution, expressed by the venom duct.

The protein localises to the secreted. This is Conotoxin Leo-T1 from Conus leopardus (Leopard cone).